A 297-amino-acid chain; its full sequence is Small ribosomal subunit biogenesis GTPase RsgA (297 aa).

One can recognise a CP-type G domain in the interval 65–223; sequence TNEIGRPAVA…IADTPGFSAI (159 aa). Residues 114–117 and 166–174 each bind GTP; these read SKAD and GQSGAGKST. The Zn(2+) site is built by Cys-247, Cys-252, His-254, and Cys-260.

This sequence belongs to the TRAFAC class YlqF/YawG GTPase family. RsgA subfamily. Monomer. Associates with 30S ribosomal subunit, binds 16S rRNA. Zn(2+) serves as cofactor.

The protein resides in the cytoplasm. One of several proteins that assist in the late maturation steps of the functional core of the 30S ribosomal subunit. Helps release RbfA from mature subunits. May play a role in the assembly of ribosomal proteins into the subunit. Circularly permuted GTPase that catalyzes slow GTP hydrolysis, GTPase activity is stimulated by the 30S ribosomal subunit. The sequence is that of Small ribosomal subunit biogenesis GTPase RsgA from Lactobacillus gasseri (strain ATCC 33323 / DSM 20243 / BCRC 14619 / CIP 102991 / JCM 1131 / KCTC 3163 / NCIMB 11718 / NCTC 13722 / AM63).